Here is a 314-residue protein sequence, read N- to C-terminus: Acetyl-coenzyme A carboxylase carboxyl transferase subunit alpha (314 aa).

Positions 32–289 (EIDMLEASLE…KSAFVEQLDS (258 aa)) constitute a CoA carboxyltransferase C-terminal domain.

It belongs to the AccA family. As to quaternary structure, acetyl-CoA carboxylase is a heterohexamer composed of biotin carboxyl carrier protein (AccB), biotin carboxylase (AccC) and two subunits each of ACCase subunit alpha (AccA) and ACCase subunit beta (AccD).

It localises to the cytoplasm. The catalysed reaction is N(6)-carboxybiotinyl-L-lysyl-[protein] + acetyl-CoA = N(6)-biotinyl-L-lysyl-[protein] + malonyl-CoA. It functions in the pathway lipid metabolism; malonyl-CoA biosynthesis; malonyl-CoA from acetyl-CoA: step 1/1. In terms of biological role, component of the acetyl coenzyme A carboxylase (ACC) complex. First, biotin carboxylase catalyzes the carboxylation of biotin on its carrier protein (BCCP) and then the CO(2) group is transferred by the carboxyltransferase to acetyl-CoA to form malonyl-CoA. The polypeptide is Acetyl-coenzyme A carboxylase carboxyl transferase subunit alpha (Staphylococcus aureus (strain bovine RF122 / ET3-1)).